The sequence spans 268 residues: tRNA pseudouridine synthase A (268 aa).

The active-site Nucleophile is Asp-52. Tyr-110 provides a ligand contact to substrate.

It belongs to the tRNA pseudouridine synthase TruA family. In terms of assembly, homodimer.

The enzyme catalyses uridine(38/39/40) in tRNA = pseudouridine(38/39/40) in tRNA. Its function is as follows. Formation of pseudouridine at positions 38, 39 and 40 in the anticodon stem and loop of transfer RNAs. This chain is tRNA pseudouridine synthase A, found in Prochlorococcus marinus (strain MIT 9312).